Reading from the N-terminus, the 305-residue chain is D-alanine--D-alanine ligase (305 aa).

In terms of domain architecture, ATP-grasp spans 107-299 (KVIFASAGLK…FGELVLRILQ (193 aa)). 134-185 (PLPVVVKPSREGSSVGVGIVRDPSRMQAALDEAFRYDSEILIEGFIDGREVQ) is an ATP binding site. Residues D253, E266, and N268 each coordinate Mg(2+).

It belongs to the D-alanine--D-alanine ligase family. Mg(2+) serves as cofactor. Mn(2+) is required as a cofactor.

The protein localises to the cytoplasm. The enzyme catalyses 2 D-alanine + ATP = D-alanyl-D-alanine + ADP + phosphate + H(+). Its pathway is cell wall biogenesis; peptidoglycan biosynthesis. Cell wall formation. The protein is D-alanine--D-alanine ligase of Citrifermentans bemidjiense (strain ATCC BAA-1014 / DSM 16622 / JCM 12645 / Bem) (Geobacter bemidjiensis).